A 273-amino-acid polypeptide reads, in one-letter code: Ribosomal RNA small subunit methyltransferase A (273 aa).

S-adenosyl-L-methionine is bound by residues N18, L20, G45, E66, D91, and N113.

The protein belongs to the class I-like SAM-binding methyltransferase superfamily. rRNA adenine N(6)-methyltransferase family. RsmA subfamily.

The protein localises to the cytoplasm. The enzyme catalyses adenosine(1518)/adenosine(1519) in 16S rRNA + 4 S-adenosyl-L-methionine = N(6)-dimethyladenosine(1518)/N(6)-dimethyladenosine(1519) in 16S rRNA + 4 S-adenosyl-L-homocysteine + 4 H(+). Its function is as follows. Specifically dimethylates two adjacent adenosines (A1518 and A1519) in the loop of a conserved hairpin near the 3'-end of 16S rRNA in the 30S particle. May play a critical role in biogenesis of 30S subunits. This chain is Ribosomal RNA small subunit methyltransferase A, found in Escherichia coli O1:K1 / APEC.